The sequence spans 1596 residues: Transcription factor Zelda (1596 aa).

3 disordered regions span residues 1-143 (MTSI…QQQQ), 209-273 (SGLG…GGAA), and 490-530 (TSPA…SVLP). Positions 13–24 (AAEALASSSATD) are enriched in low complexity. The segment covering 25-53 (SGGGGAGGGGGGGGGGSGGPGAGGTGGVG) has biased composition (gly residues). Positions 60 to 72 (NATISAAADSSDN) are enriched in polar residues. Low complexity-rich tracts occupy residues 73 to 123 (QPGT…ITHQ) and 226 to 267 (SAPS…QTPG). Residues 501 to 518 (GGPGQEGAAGAAPGGGYR) are compositionally biased toward gly residues. The segment at 552-576 (YNCTACNKWFTSSGHLKRHYNTTLH) adopts a C2H2-type 1 zinc-finger fold. Disordered regions lie at residues 578 to 813 (NAVK…TTTA), 825 to 945 (EDSN…MGML), 1017 to 1074 (GEQH…MPLT), and 1252 to 1322 (QMQH…TTLP). A compositionally biased stretch (low complexity) spans 610–634 (RGNAAAAAAAAAAAASASGQGQQQQ). Residues 635–653 (PPIPPPPANVPPPEPPRSP) are compositionally biased toward pro residues. A compositionally biased stretch (gly residues) spans 656–668 (YGGGGGLGVGAMG). Residues 673-682 (SQYSASPSPT) are compositionally biased toward polar residues. Composition is skewed to low complexity over residues 683 to 709 (QQQQ…GYGY) and 719 to 753 (NASP…HHNS). The segment covering 768–781 (PHNNNTTQMPSSQM) has biased composition (polar residues). Positions 796 to 813 (TTTRAPQITTTATTTTTA) are enriched in low complexity. Residues 830-840 (THTHTHTHPNH) show a composition bias toward basic residues. Positions 849–858 (SSSSSSSMAT) are enriched in low complexity. Positions 864–877 (QELRDQEQADDHLH) are enriched in basic and acidic residues. Over residues 879-916 (HQQASQQYLLSARHYHSSTPNTLSSSNTNPSTPSSNSP) the composition is skewed to low complexity. The transactivation activation domain (TAD) stretch occupies residues 904–1297 (SNTNPSTPSS…PLAKKRRGGN (394 aa)). Polar residues predominate over residues 921–932 (RQEQQGTDFSRT). Residues 933 to 944 (TPPPQPLPPMGM) show a composition bias toward pro residues. The span at 1019-1036 (QHQRQEADHHQQQRELHQ) shows a compositional bias: basic and acidic residues. 2 stretches are compositionally biased toward low complexity: residues 1037–1062 (LDQQ…SPTS) and 1252–1275 (QMQH…QQQQ). Composition is skewed to polar residues over residues 1276–1286 (ILADQTQTMAQ) and 1309–1322 (SSVG…TTLP). The C2H2-type 2 zinc finger occupies 1326–1349 (IKCLECDKEFTKNCYLTQHNKSFH). Residues 1355 to 1378 (FRCQKCGKRFQSEDVYTTHLGRHR) form a C2H2-type 3; degenerate zinc finger. 2 C2H2-type zinc fingers span residues 1384–1407 (HKCE…EAIH) and 1413–1435 (HMCD…LETH).

Zygotically expressed in the developing embryonic germ layers, nervous system, imaginal disk primordia and in larval wing and eye disks. In terms of tissue distribution, detected in the germline cells of the ovary, in unfertilized eggs and throughout early development. Later, it becomes mostly restricted to the nervous system and specific head regions. Also expressed in imaginal wing disks in third instar larvae.

The protein resides in the nucleus. It is found in the chromosome. Functionally, transcription factor required for zygotic genome activation (ZGA), a critical event in early embryonic development during which the developmental control passes from maternally provided mRNAs to the expression of the zygotic genome after fertilization. Binds to regulatory DNA sequences containing a 5'-CAGGTAG-3' sequence motif, which are highly enriched among developmental enhancers. Within 1 hour into development, or by the embryo's 8th nuclear cycle, binds the majority of its motifs genome-wide. Zelda-binding promotes nucleosome depletion and chromatin accessibility, thereby facilitating the binding of patterning transcription factors, including the binding of the dorsoventral patterning transcription factors dorsal (dl) and twist (twi), and the anteroposterior patterning transcription factors bicoid (bcd) and caudal (cad). Promotes the activity of patterning transcription factors, such as bcd and dl, by lowering the concentration threshold required for transcriptional activation. Required both for the earliest (minor) and major waves of transcription during ZGA. Also involved in maternal mRNA clearance during the maternal-to-zygote transition by promoting expression of microRNAs (miRNAs), such as miR-1, miR-9a and miR-309, which mediate degradation of maternally-loaded RNAs. Also involved in post-blastoderm development: nvolved in nervous system development by maintaining neuroblasts in an undifferentiated state and equired for wing disk development. In terms of biological role, constitutes the main isoform expressed throughout development. Transcription factor required for zygotic genome activation (ZGA). Acts as a dominant negative inhibitor of transcription factor activity of isoform A. This is Transcription factor Zelda from Drosophila melanogaster (Fruit fly).